A 444-amino-acid chain; its full sequence is tRNA-2-methylthio-N(6)-dimethylallyladenosine synthase (444 aa).

In terms of domain architecture, MTTase N-terminal spans 10–126 (SSFYIHTFGC…LAGLVAGLRE (117 aa)). [4Fe-4S] cluster contacts are provided by Cys-19, Cys-55, Cys-89, Cys-163, Cys-167, and Cys-170. In terms of domain architecture, Radical SAM core spans 149–379 (RAGSISAFLP…IELQNAISRE (231 aa)). In terms of domain architecture, TRAM spans 382–444 (QREIGKTVEV…TSATLSGEAV (63 aa)).

The protein belongs to the methylthiotransferase family. MiaB subfamily. As to quaternary structure, monomer. [4Fe-4S] cluster is required as a cofactor.

It localises to the cytoplasm. The enzyme catalyses N(6)-dimethylallyladenosine(37) in tRNA + (sulfur carrier)-SH + AH2 + 2 S-adenosyl-L-methionine = 2-methylsulfanyl-N(6)-dimethylallyladenosine(37) in tRNA + (sulfur carrier)-H + 5'-deoxyadenosine + L-methionine + A + S-adenosyl-L-homocysteine + 2 H(+). Catalyzes the methylthiolation of N6-(dimethylallyl)adenosine (i(6)A), leading to the formation of 2-methylthio-N6-(dimethylallyl)adenosine (ms(2)i(6)A) at position 37 in tRNAs that read codons beginning with uridine. The protein is tRNA-2-methylthio-N(6)-dimethylallyladenosine synthase of Chlorobaculum tepidum (strain ATCC 49652 / DSM 12025 / NBRC 103806 / TLS) (Chlorobium tepidum).